Consider the following 94-residue polypeptide: uncharacterized protein (94 aa).

The chain crosses the membrane as a helical span at residues 13-33; sequence IVICLTTIISVTIFYILVSFF.

It is found in the membrane. This is an uncharacterized protein from Dictyostelium discoideum (Social amoeba).